Reading from the N-terminus, the 393-residue chain is Ribonuclease D (393 aa).

The 3'-5' exonuclease domain maps to 14-181 (LITTTEDLTG…VYQLLLERLE (168 aa)). Positions 219–300 (NRRMLGVLRA…AAARALPDGA (82 aa)) constitute an HRDC domain.

Belongs to the RNase D family. Requires a divalent metal cation as cofactor.

The protein localises to the cytoplasm. The enzyme catalyses Exonucleolytic cleavage that removes extra residues from the 3'-terminus of tRNA to produce 5'-mononucleotides.. Exonuclease involved in the 3' processing of various precursor tRNAs. Initiates hydrolysis at the 3'-terminus of an RNA molecule and releases 5'-mononucleotides. The sequence is that of Ribonuclease D from Gluconacetobacter diazotrophicus (strain ATCC 49037 / DSM 5601 / CCUG 37298 / CIP 103539 / LMG 7603 / PAl5).